The primary structure comprises 150 residues: Large-conductance mechanosensitive channel (150 aa).

The next 2 helical transmembrane spans lie at 14–34 (VIDL…VTSF) and 81–101 (GVFL…FLVV).

It belongs to the MscL family. Homopentamer.

It localises to the cell membrane. Channel that opens in response to stretch forces in the membrane lipid bilayer. May participate in the regulation of osmotic pressure changes within the cell. This Syntrophomonas wolfei subsp. wolfei (strain DSM 2245B / Goettingen) protein is Large-conductance mechanosensitive channel.